The sequence spans 347 residues: Phenylalanine--tRNA ligase alpha subunit (347 aa).

Glu-265 contacts Mg(2+).

The protein belongs to the class-II aminoacyl-tRNA synthetase family. Phe-tRNA synthetase alpha subunit type 1 subfamily. In terms of assembly, tetramer of two alpha and two beta subunits. Mg(2+) is required as a cofactor.

The protein resides in the cytoplasm. The catalysed reaction is tRNA(Phe) + L-phenylalanine + ATP = L-phenylalanyl-tRNA(Phe) + AMP + diphosphate + H(+). The protein is Phenylalanine--tRNA ligase alpha subunit of Wolbachia sp. subsp. Drosophila simulans (strain wRi).